Reading from the N-terminus, the 225-residue chain is NAD(P)H-quinone oxidoreductase subunit K, chloroplastic (225 aa).

Cys-43, Cys-44, Cys-108, and Cys-139 together coordinate [4Fe-4S] cluster.

This sequence belongs to the complex I 20 kDa subunit family. NDH is composed of at least 16 different subunits, 5 of which are encoded in the nucleus. [4Fe-4S] cluster is required as a cofactor.

It is found in the plastid. Its subcellular location is the chloroplast thylakoid membrane. It catalyses the reaction a plastoquinone + NADH + (n+1) H(+)(in) = a plastoquinol + NAD(+) + n H(+)(out). It carries out the reaction a plastoquinone + NADPH + (n+1) H(+)(in) = a plastoquinol + NADP(+) + n H(+)(out). Its function is as follows. NDH shuttles electrons from NAD(P)H:plastoquinone, via FMN and iron-sulfur (Fe-S) centers, to quinones in the photosynthetic chain and possibly in a chloroplast respiratory chain. The immediate electron acceptor for the enzyme in this species is believed to be plastoquinone. Couples the redox reaction to proton translocation, and thus conserves the redox energy in a proton gradient. This chain is NAD(P)H-quinone oxidoreductase subunit K, chloroplastic, found in Vitis vinifera (Grape).